Consider the following 245-residue polypeptide: UPF0246 protein cgR_1824 (245 aa).

It belongs to the UPF0246 family.

This Corynebacterium glutamicum (strain R) protein is UPF0246 protein cgR_1824.